We begin with the raw amino-acid sequence, 29 residues long: Toxin TdII-3 (29 aa).

Positions 1–29 (KDGYLVGTDGCKYGCFTRPGHFCANEECL) constitute an LCN-type CS-alpha/beta domain.

Belongs to the long (4 C-C) scorpion toxin superfamily. Sodium channel inhibitor family. Beta subfamily. Expressed by the venom gland.

The protein resides in the secreted. Functionally, binds voltage-independently to sodium channels (Nav) and shifts the voltage of activation toward more negative potentials. This toxin is active against mammals and also affects neuromuscular preparations of frog. This chain is Toxin TdII-3, found in Tityus discrepans (Venezuelan scorpion).